The following is a 430-amino-acid chain: Cholecystokinin receptor type A (430 aa).

Residues 1–41 (MDVVDSLFVNGSNITSACELGFENETLFCLDRPRPSKEWQP) lie on the Extracellular side of the membrane. N-linked (GlcNAc...) asparagine glycans are attached at residues Asn10, Asn13, and Asn24. A disulfide bond links Cys18 and Cys29. A helical membrane pass occupies residues 42–67 (AVQILLYSLIFLLSVLGNTLVITVLI). The Cytoplasmic segment spans residues 68-77 (RNKRMRTVTN). A helical transmembrane segment spans residues 78–104 (IFLLSLAVSDLMLCLFCMPFNLIPSLL). The Extracellular portion of the chain corresponds to 105-115 (KDFIFGSAVCK). A disulfide bond links Cys114 and Cys196. A helical transmembrane segment spans residues 116 to 137 (TTTYFMGTSVSVSTFNLVAISL). The Cytoplasmic segment spans residues 138–157 (ERYGAICKPLQSRVWQTKSH). A helical transmembrane segment spans residues 158 to 178 (ALKVIAATWCLSFTIMTPYPI). The Extracellular portion of the chain corresponds to 179–210 (YSNLVPFTKNNNQTGNMCRFLLPNDVMQQTWH). N-linked (GlcNAc...) asparagine glycosylation is present at Asn190. A helical transmembrane segment spans residues 211-234 (TFLLLILFLIPGIVMMVAYGLISL). At 235–315 (ELYQGIKFDA…NLMAKKRVIR (81 aa)) the chain is on the cytoplasmic side. The chain crosses the membrane as a helical span at residues 316 to 336 (MLIVIVVLFFLCWMPIFSANA). Residues 337–351 (WRAYDTVSAERHLSG) are Extracellular-facing. The chain crosses the membrane as a helical span at residues 352–375 (TPISFILLLSYTSSCVNPIIYCFM). Residues 376-430 (NKRFRLGFMATFPCCPNPGTPGVRGEMGEEEEGRTTGASLSRYSYSHMSTSAPPP) are Cytoplasmic-facing. A lipid anchor (S-palmitoyl cysteine) is attached at Cys389. Residues 396 to 430 (PGVRGEMGEEEEGRTTGASLSRYSYSHMSTSAPPP) are disordered. Polar residues predominate over residues 413–430 (ASLSRYSYSHMSTSAPPP).

The protein belongs to the G-protein coupled receptor 1 family.

The protein resides in the cell membrane. Functionally, receptor for cholecystokinin. Mediates pancreatic growth and enzyme secretion, smooth muscle contraction of the gall bladder and stomach. Has a 1000-fold higher affinity for CCK rather than for gastrin. It modulates feeding and dopamine-induced behavior in the central and peripheral nervous system. This receptor mediates its action by association with G proteins that activate a phosphatidylinositol-calcium second messenger system. In Cavia porcellus (Guinea pig), this protein is Cholecystokinin receptor type A (CCKAR).